The sequence spans 346 residues: Short-wave-sensitive opsin 1 (346 aa).

The Extracellular portion of the chain corresponds to 1 to 31; it reads MSGEDDFYLFQNISSVGPWDGPQYHLAPVWA. Asn12 is a glycosylation site (N-linked (GlcNAc...) asparagine). Residues 32–56 form a helical membrane-spanning segment; the sequence is FRLQAAFMGFVFFVGTPLNAIVLVA. At 57-68 the chain is on the cytoplasmic side; it reads TLHYKKLRQPLN. A helical membrane pass occupies residues 69 to 94; sequence YILVNVSLGGFLFCIFSVFTVFIASC. Residues 95-108 are Extracellular-facing; it reads HGYFLFGRHVCALE. A disulfide bridge connects residues Cys105 and Cys182. Residues 109–128 traverse the membrane as a helical segment; sequence AFLGSVAGLVTGWSLAFLAF. The Cytoplasmic segment spans residues 129-147; the sequence is ERYVVICKPFGSIRFNSKH. The chain crosses the membrane as a helical span at residues 148–171; that stretch reads ALMVVLATWIIGIGVSIPPFFGWS. At 172 to 197 the chain is on the extracellular side; sequence RFIPEGLQCSCGPDWYTVGTKYRSEY. The chain crosses the membrane as a helical span at residues 198 to 225; it reads YTWFLFIFCFIIPLSLICFSYSQLLRTL. The Cytoplasmic portion of the chain corresponds to 226–247; that stretch reads RAVAAQQQESATTQKAEREVSH. A helical transmembrane segment spans residues 248–271; sequence MVVVMVGSFCLCYVPYAALAMYMV. Over 272 to 279 the chain is Extracellular; it reads NNRNHGLD. A helical membrane pass occupies residues 280 to 304; that stretch reads LRLVTIPAFFSKSSCVYNPIIYCFM. An N6-(retinylidene)lysine modification is found at Lys291. The Cytoplasmic segment spans residues 305-346; sequence NKQFRACILEMVCRKPMADESDVSGSQKTEVSTVSSSKVGPH. A disordered region spans residues 324 to 346; sequence ESDVSGSQKTEVSTVSSSKVGPH. Low complexity predominate over residues 330–346; the sequence is SQKTEVSTVSSSKVGPH.

This sequence belongs to the G-protein coupled receptor 1 family. Opsin subfamily. Phosphorylated on some or all of the serine and threonine residues present in the C-terminal region. As to expression, expressed in the inner and outer segments of cone photoreceptor cells in the retina (at protein level).

It is found in the cell membrane. The protein resides in the photoreceptor inner segment. It localises to the cell projection. The protein localises to the cilium. Its subcellular location is the photoreceptor outer segment. It is found in the cytoplasm. The protein resides in the perinuclear region. Functionally, visual pigments are the light-absorbing molecules that mediate vision. They consist of an apoprotein, opsin, covalently linked to cis-retinal. Required for the maintenance of cone outer segment organization in the ventral retina, but not essential for the maintenance of functioning cone photoreceptors. Involved in ensuring correct abundance and localization of retinal membrane proteins. May increase spectral sensitivity in dim light. This chain is Short-wave-sensitive opsin 1 (Opn1sw), found in Mus musculus (Mouse).